Consider the following 245-residue polypeptide: Biosynthetic peptidoglycan transglycosylase (245 aa).

Residues 20-42 form a helical membrane-spanning segment; sequence VYAGSVFAGAWLATQLFYLAQIA.

Belongs to the glycosyltransferase 51 family.

The protein localises to the cell inner membrane. The catalysed reaction is [GlcNAc-(1-&gt;4)-Mur2Ac(oyl-L-Ala-gamma-D-Glu-L-Lys-D-Ala-D-Ala)](n)-di-trans,octa-cis-undecaprenyl diphosphate + beta-D-GlcNAc-(1-&gt;4)-Mur2Ac(oyl-L-Ala-gamma-D-Glu-L-Lys-D-Ala-D-Ala)-di-trans,octa-cis-undecaprenyl diphosphate = [GlcNAc-(1-&gt;4)-Mur2Ac(oyl-L-Ala-gamma-D-Glu-L-Lys-D-Ala-D-Ala)](n+1)-di-trans,octa-cis-undecaprenyl diphosphate + di-trans,octa-cis-undecaprenyl diphosphate + H(+). It functions in the pathway cell wall biogenesis; peptidoglycan biosynthesis. Functionally, peptidoglycan polymerase that catalyzes glycan chain elongation from lipid-linked precursors. The protein is Biosynthetic peptidoglycan transglycosylase of Burkholderia orbicola (strain MC0-3).